Consider the following 690-residue polypeptide: Xylosyl- and glucuronyltransferase LARGE2 (690 aa).

The Cytoplasmic portion of the chain corresponds to 1–8 (MLPRGRPR). Residues 9 to 29 (AMGAAVLLLLLLLVVGFFLFG) form a helical; Signal-anchor for type II membrane protein membrane-spanning segment. Topologically, residues 30 to 690 (RDPDYGLGTT…TALQQARSRA (661 aa)) are lumenal. N-linked (GlcNAc...) asparagine glycosylation is found at asparagine 51 and asparagine 78. A xylosyltransferase activity region spans residues 68-343 (LHVAIVCAGY…FLGYDGKLLR (276 aa)). Mn(2+)-binding residues include aspartate 172 and aspartate 174. N-linked (GlcNAc...) asparagine glycosylation is present at asparagine 202. The tract at residues 344–686 (RELFGCPNQF…LKYLTALQQA (343 aa)) is glucuronyltransferase activity. Mn(2+) is bound by residues aspartate 492 and aspartate 494.

The protein in the C-terminal section; belongs to the glycosyltransferase 49 family. It in the N-terminal section; belongs to the glycosyltransferase 8 family. This sequence belongs to the glycosyltransferase 8 family. In terms of assembly, interacts with B4GAT1. Mn(2+) is required as a cofactor. Highly expressed in the testis and kidney, but weakly expressed in the heart and brain. Expressed during embryogenesis from 7 dpc.

Its subcellular location is the golgi apparatus membrane. The catalysed reaction is 3-O-[beta-D-GlcA-(1-&gt;3)-beta-D-Xyl-(1-&gt;4)-Rib-ol-P-Rib-ol-P-3-beta-D-GalNAc-(1-&gt;3)-beta-D-GlcNAc-(1-&gt;4)-(O-6-P-alpha-D-Man)]-Thr-[protein] + UDP-alpha-D-xylose = 3-O-[alpha-D-Xyl-(1-&gt;3)-beta-D-GlcA-(1-&gt;4)-beta-D-Xyl-(1-&gt;4)-Rib-ol-P-Rib-ol-P-3-beta-D-GalNAc-(1-&gt;3)-beta-D-GlcNAc-(1-&gt;4)-(O-6-P-alpha-D-Man)]-Thr-[protein] + UDP + H(+). The enzyme catalyses 3-O-{(1-&gt;[3)-alpha-D-Xyl-(1-&gt;3)-beta-D-GlcA-(1-&gt;](n)-4)-beta-D-Xyl-(1-&gt;4)-Rib-ol-P-Rib-ol-P-3-beta-D-GalNAc-(1-&gt;3)-beta-D-GlcNAc-(1-&gt;4)-O-6-P-alpha-D-Man}-L-Thr-[protein] + UDP-alpha-D-glucuronate = 3-O-{beta-D-GlcA-(1-&gt;[3)-alpha-D-Xyl-(1-&gt;3)-beta-D-GlcA-(1-&gt;](n)-4)-beta-D-Xyl-(1-&gt;4)-Rib-ol-P-Rib-ol-P-3-beta-D-GalNAc-(1-&gt;3)-beta-D-GlcNAc-(1-&gt;4)-O-6-P-alpha-D-Man}-L-Thr-[protein] + UDP + H(+). It catalyses the reaction 3-O-{beta-D-GlcA-(1-&gt;[3)-alpha-D-Xyl-(1-&gt;3)-beta-D-GlcA-(1-&gt;](n)-4)-beta-D-Xyl-(1-&gt;4)-Rib-ol-P-Rib-ol-P-3-beta-D-GalNAc-(1-&gt;3)-beta-D-GlcNAc-(1-&gt;4)-O-6-P-alpha-D-Man}-L-Thr-[protein] + UDP-alpha-D-xylose = 3-O-{(1-&gt;[3)-alpha-D-Xyl-(1-&gt;3)-beta-D-GlcA-(1-&gt;](n+1)-4)-beta-D-Xyl-(1-&gt;4)-Rib-ol-P-Rib-ol-P-3-beta-D-GalNAc-(1-&gt;3)-beta-D-GlcNAc-(1-&gt;4)-O-6-P-alpha-D-Man}-L-Thr-[protein] + UDP + H(+). Its pathway is protein modification; protein glycosylation. Its function is as follows. Bifunctional glycosyltransferase with both alpha-1,3-xylosyltransferase and beta-1,3-glucuronyltransferase activities involved in the maturation of alpha-dystroglycan (DAG1) by glycosylation leading to DAG1 binding to laminin G-like domain-containing extracellular proteins with high affinity and in a phosphorylated-O-mannosyl trisaccharide dependent manner. Elongates the glucuronyl-beta-1,4-xylose-beta disaccharide primer structure by adding repeating units [-3-Xylose-alpha-1,3-GlcA-beta-1-] to produce a heteropolysaccharide. Supports the maturation of DAG1 more effectively than LARGE1. In addition, can modify both heparan sulfate (HS)- and chondroitin/dermatan sulfate (CS/DS)-proteoglycans (PGs), namely GPC4, with a glycosaminoglycan (GAG)-like polysaccharide composed of xylose and glucuronic acid to confer laminin binding. In Mus musculus (Mouse), this protein is Xylosyl- and glucuronyltransferase LARGE2.